Reading from the N-terminus, the 54-residue chain is Large ribosomal subunit protein bL32c (54 aa).

The protein belongs to the bacterial ribosomal protein bL32 family.

Its subcellular location is the plastid. The protein localises to the chloroplast. In Gossypium barbadense (Sea Island cotton), this protein is Large ribosomal subunit protein bL32c.